The following is a 384-amino-acid chain: MSTLVQCGYFERGQCQSCRHIKLPMAQQLAAKTQELQQLLAPFVDNAEAQFLPPVVGDSSGFRNKAKMVVLGAAHAPVLGIVSPSGEAVSLCDCLLYPADMQALLHRLERFVQQAGIPPYRVDKAKGELKFILLTRSQVRGEYMLRFVLRSRDAIARIERELPALMAEYPQIKVVSVNLQPIHMAILEGEEEIFLTENTRLEERFNDVPLFIRPKSFFQTNPQVAAKLYQTAREWVADFAPASLWDLFCGVGGFGLHCAAKDIPLTGIEIEAEAIACAKMSAQLMGLDKVQFMALDSTDFAKGDAAQTKPELIIVNPPRRGIGESLCHSLSEFAPKAILYSSCNPKTLAKDLGHIRGYRLTKVQLFDLFPHSDHFEVLALLVKD.

4 residues coordinate [4Fe-4S] cluster: Cys-7, Cys-15, Cys-18, and Cys-94. Gln-219, Phe-248, Glu-269, and Asn-316 together coordinate S-adenosyl-L-methionine. Cys-343 acts as the Nucleophile in catalysis.

It belongs to the class I-like SAM-binding methyltransferase superfamily. RNA M5U methyltransferase family. RlmC subfamily.

It carries out the reaction uridine(747) in 23S rRNA + S-adenosyl-L-methionine = 5-methyluridine(747) in 23S rRNA + S-adenosyl-L-homocysteine + H(+). In terms of biological role, catalyzes the formation of 5-methyl-uridine at position 747 (m5U747) in 23S rRNA. The polypeptide is 23S rRNA (uracil(747)-C(5))-methyltransferase RlmC (Shewanella sp. (strain MR-7)).